Here is a 589-residue protein sequence, read N- to C-terminus: Putative sphingomyelin phosphodiesterase asm-3 (589 aa).

An N-terminal signal peptide occupies residues 1–17 (MLLGLLVLSLAFQGTLA). The 84-residue stretch at 18-101 (VTECEECKSI…LMKNDCGDFV (84 aa)) folds into the Saposin B-type domain. Disulfide bonds link cysteine 21–cysteine 97, cysteine 24–cysteine 89, and cysteine 52–cysteine 63. The N-linked (GlcNAc...) asparagine glycan is linked to asparagine 109. 2 residues coordinate Zn(2+): aspartate 139 and histidine 141. Intrachain disulfides connect cysteine 154–cysteine 159 and cysteine 160–cysteine 188. Aspartate 217 serves as a coordination point for Zn(2+). Asparagine 237 carries an N-linked (GlcNAc...) asparagine glycan. Residue asparagine 257 participates in Zn(2+) binding. N-linked (GlcNAc...) asparagine glycosylation is present at asparagine 334. Zn(2+) is bound by residues histidine 364, histidine 398, and histidine 400. The N-linked (GlcNAc...) asparagine glycan is linked to asparagine 463. 2 cysteine pairs are disulfide-bonded: cysteine 530–cysteine 535 and cysteine 541–cysteine 553. The disordered stretch occupies residues 562–589 (KPEPKKNKYSARFATSNERRRGKEECKI). The span at 578–589 (NERRRGKEECKI) shows a compositional bias: basic and acidic residues.

Belongs to the acid sphingomyelinase family. Requires Zn(2+) as cofactor.

The protein resides in the secreted. The enzyme catalyses an N-(acyl)-sphingosylphosphocholine + H2O = an N-acyl-sphingoid base + phosphocholine + H(+). It carries out the reaction a sphingomyelin + H2O = phosphocholine + an N-acylsphing-4-enine + H(+). The catalysed reaction is an N-acyl-15-methylhexadecasphing-4-enine-1-phosphocholine + H2O = an N-acyl-15-methylhexadecasphing-4-enine + phosphocholine + H(+). It participates in lipid metabolism; sphingolipid metabolism. Functionally, converts sphingomyelin to ceramide (N-acyl-sphingoid base) and phosphocholine. C.elegans contain specific sphingoid bases, which are unique or different in structure compared to the sphingoid bases found in other animals. Two examples of these distinctive compounds are: 15-methylhexadecasphinganine and 15-methylhexadecasphing-4-enine. This Caenorhabditis elegans protein is Putative sphingomyelin phosphodiesterase asm-3 (asm-3).